Reading from the N-terminus, the 110-residue chain is MNVPKARLLKVAELSAKIFDQNFNPSGIRTGSKILNERLKGPSVASYYGNPDILKFRHLKTLYPDIEFVDLEEQYRLSMVEAKKRRGKGAPKKMKKDAAATAKGKGKKKK.

Residues 84 to 95 show a composition bias toward basic residues; sequence KRRGKGAPKKMK. The segment at 84 to 110 is disordered; it reads KRRGKGAPKKMKKDAAATAKGKGKKKK.

It belongs to the mitochondrion-specific ribosomal protein mS33 family. As to quaternary structure, component of the mitochondrial small ribosomal subunit (mt-SSU). Mature yeast 74S mitochondrial ribosomes consist of a small (37S) and a large (54S) subunit. The 37S small subunit contains a 15S ribosomal RNA (15S mt-rRNA) and 34 different proteins. The 54S large subunit contains a 21S rRNA (21S mt-rRNA) and 46 different proteins.

The protein resides in the mitochondrion. In terms of biological role, component of the mitochondrial ribosome (mitoribosome), a dedicated translation machinery responsible for the synthesis of mitochondrial genome-encoded proteins, including at least some of the essential transmembrane subunits of the mitochondrial respiratory chain. The mitoribosomes are attached to the mitochondrial inner membrane and translation products are cotranslationally integrated into the membrane. This chain is Small ribosomal subunit protein mS33 (RSM27), found in Saccharomyces cerevisiae (strain ATCC 204508 / S288c) (Baker's yeast).